Consider the following 577-residue polypeptide: Proline--tRNA ligase (577 aa).

It belongs to the class-II aminoacyl-tRNA synthetase family. ProS type 1 subfamily. Homodimer.

The protein resides in the cytoplasm. It carries out the reaction tRNA(Pro) + L-proline + ATP = L-prolyl-tRNA(Pro) + AMP + diphosphate. In terms of biological role, catalyzes the attachment of proline to tRNA(Pro) in a two-step reaction: proline is first activated by ATP to form Pro-AMP and then transferred to the acceptor end of tRNA(Pro). As ProRS can inadvertently accommodate and process non-cognate amino acids such as alanine and cysteine, to avoid such errors it has two additional distinct editing activities against alanine. One activity is designated as 'pretransfer' editing and involves the tRNA(Pro)-independent hydrolysis of activated Ala-AMP. The other activity is designated 'posttransfer' editing and involves deacylation of mischarged Ala-tRNA(Pro). The misacylated Cys-tRNA(Pro) is not edited by ProRS. The protein is Proline--tRNA ligase of Limosilactobacillus reuteri (strain DSM 20016) (Lactobacillus reuteri).